Reading from the N-terminus, the 134-residue chain is Probable histone H2A.3 (134 aa).

Belongs to the histone H2A family. As to quaternary structure, the nucleosome is a histone octamer containing two molecules each of H2A, H2B, H3 and H4 assembled in one H3-H4 heterotetramer and two H2A-H2B heterodimers. The octamer wraps approximately 147 bp of DNA.

It is found in the nucleus. The protein resides in the chromosome. Functionally, core component of nucleosome. Nucleosomes wrap and compact DNA into chromatin, limiting DNA accessibility to the cellular machineries which require DNA as a template. Histones thereby play a central role in transcription regulation, DNA repair, DNA replication and chromosomal stability. DNA accessibility is regulated via a complex set of post-translational modifications of histones, also called histone code, and nucleosome remodeling. The protein is Probable histone H2A.3 of Oryza sativa subsp. indica (Rice).